The primary structure comprises 227 residues: Lipoprotein-releasing system ATP-binding protein LolD (227 aa).

Residues 6-227 form the ABC transporter domain; that stretch reads LKCENINKFY…MQDGLLKEGA (222 aa). Residue 42–49 coordinates ATP; that stretch reads GSSGSGKS.

Belongs to the ABC transporter superfamily. Lipoprotein translocase (TC 3.A.1.125) family. The complex is composed of two ATP-binding proteins (LolD) and two transmembrane proteins (LolC and LolE).

The protein resides in the cell inner membrane. Functionally, part of the ABC transporter complex LolCDE involved in the translocation of mature outer membrane-directed lipoproteins, from the inner membrane to the periplasmic chaperone, LolA. Responsible for the formation of the LolA-lipoprotein complex in an ATP-dependent manner. The protein is Lipoprotein-releasing system ATP-binding protein LolD of Haemophilus influenzae (strain 86-028NP).